Reading from the N-terminus, the 432-residue chain is Metacaspase-1 (432 aa).

Over residues 1–11 the composition is skewed to basic residues; it reads MEVMDHHHHTS. Disordered regions lie at residues 1–21 and 41–87; these read MEVMDHHHHTSSTRPNPTTRR and PQPG…PNAP. Residues 12-21 are compositionally biased toward low complexity; it reads STRPNPTTRR. The segment covering 46–74 has biased composition (pro residues); sequence GAPPPQGGYGYPQPPPPQQPYGYSQPPPQ. Residues His-223 and Cys-279 contribute to the active site.

The protein belongs to the peptidase C14B family.

Involved in cell death (apoptosis). This chain is Metacaspase-1 (casA), found in Sclerotinia sclerotiorum (strain ATCC 18683 / 1980 / Ss-1) (White mold).